We begin with the raw amino-acid sequence, 382 residues long: MKLHEYEAKELFSKYGVKIPPGRVATTPEEVRKIAEEIGGPVVLKAQVVVAGRGKAGGIKVAKTPEEAYELATKMFGMNIKGLVVKKIYVTKYVEVEREMYLSLIIDRATRRYLFLASPIGGVDIEEIAKTQPEKIKRVYVDPSVGLRDYHVRSIVLWLGFKPETPQWRQASSIVQAMYNIMVDYDAELVESNPLAVTREGDVIPLDARVIVDDNALYKHPELEKALEEDPRDVSEFEMYAKKIGFHYVELDGDVGIIGNGAGLTMATMDLVYHFGGRPANFLDIGGGASRDVVKEALKVLLRHPRVKVIFMNIFGGITRADEVAAGVEAALAEEGGTKKKIVVRMKGTNEELGRQMLAKLGIPLYENAEEAAQKAVELARA.

One can recognise an ATP-grasp domain in the interval 9–240; the sequence is KELFSKYGVK…PRDVSEFEMY (232 aa). Residues K45, 52–54, V94, and E99 each bind ATP; that span reads GRG. Residues N193 and D207 each contribute to the Mg(2+) site. Substrate contacts are provided by residues N260 and 317-319; that span reads GIT.

It belongs to the succinate/malate CoA ligase beta subunit family. As to quaternary structure, heterotetramer of two alpha and two beta subunits. Mg(2+) serves as cofactor.

The catalysed reaction is succinate + ATP + CoA = succinyl-CoA + ADP + phosphate. The enzyme catalyses GTP + succinate + CoA = succinyl-CoA + GDP + phosphate. It functions in the pathway carbohydrate metabolism; tricarboxylic acid cycle; succinate from succinyl-CoA (ligase route): step 1/1. Succinyl-CoA synthetase functions in the citric acid cycle (TCA), coupling the hydrolysis of succinyl-CoA to the synthesis of either ATP or GTP and thus represents the only step of substrate-level phosphorylation in the TCA. The beta subunit provides nucleotide specificity of the enzyme and binds the substrate succinate, while the binding sites for coenzyme A and phosphate are found in the alpha subunit. This is Succinate--CoA ligase [ADP-forming] subunit beta from Pyrobaculum arsenaticum (strain DSM 13514 / JCM 11321 / PZ6).